We begin with the raw amino-acid sequence, 734 residues long: Predicted GPI-anchored protein 49 (734 aa).

An N-terminal signal peptide occupies residues 1–16 (MNYITSLLLLSSNTFL). N-linked (GlcNAc...) asparagine glycans are attached at residues Asn27, Asn56, Asn68, and Asn71. The segment at 78–145 (DNSDTDIDDS…NESDTQNEND (68 aa)) is disordered. Residues 87-98 (SSSNSEDVSSND) are compositionally biased toward low complexity. N-linked (GlcNAc...) asparagine glycosylation is found at Asn105, Asn118, Asn136, and Asn180. The span at 110–129 (FSDESDEGNDSDDNGDEVEN) shows a compositional bias: acidic residues. The span at 130–141 (MENNQANESDTQ) shows a compositional bias: polar residues. Disordered regions lie at residues 216-262 (SPKS…LKSK) and 331-360 (DANP…RLPT). Basic residues predominate over residues 228 to 259 (SRKKTLKSKSKSKSSKLKHKSRKSHKRRPKLL). N-linked (GlcNAc...) asparagine glycosylation is found at Asn388 and Asn427. Residues 447-479 (PPRYSNHHSEFTVERPPRPSRTKKRPRIKAKKT) form a disordered region. A compositionally biased stretch (basic and acidic residues) spans 453–463 (HHSEFTVERPP). Residues 464 to 479 (RPSRTKKRPRIKAKKT) are compositionally biased toward basic residues. The N-linked (GlcNAc...) asparagine glycan is linked to Asn517. The tract at residues 582-653 (KPQETKLHSP…STTSTKPNDQ (72 aa)) is disordered. The segment covering 592-611 (TSTDTKSSKLMSSSSSNNNK) has biased composition (low complexity). Residues 620–631 (EYNQTQESTSYN) show a composition bias toward polar residues. Asn622 and Asn631 each carry an N-linked (GlcNAc...) asparagine glycan. A compositionally biased stretch (low complexity) spans 632–650 (TTKAVPKTSVVSSTTSTKP). Ser707 carries the GPI-anchor amidated serine lipid modification. Positions 708-734 (ASQNLSFSVLGLIILLLLLPGLLIIIM) are cleaved as a propeptide — removed in mature form. Asn711 carries an N-linked (GlcNAc...) asparagine glycan.

It localises to the cell membrane. This Candida albicans (strain SC5314 / ATCC MYA-2876) (Yeast) protein is Predicted GPI-anchored protein 49 (PGA49).